A 386-amino-acid polypeptide reads, in one-letter code: 26S proteasome non-ATPase regulatory subunit 13 homolog B (386 aa).

An N-acetylalanine modification is found at Ala-2. Positions 174 to 347 constitute a PCI domain; the sequence is FSEFYKNALL…GTVYVSWAQP (174 aa).

This sequence belongs to the proteasome subunit S11 family. In terms of assembly, component of the 19S regulatory particle (RP/PA700) lid subcomplex of the 26S proteasome. The 26S proteasome is composed of a core protease (CP), known as the 20S proteasome, capped at one or both ends by the 19S regulatory particle (RP/PA700). The RP/PA700 complex is composed of at least 17 different subunits in two subcomplexes, the base and the lid, which form the portions proximal and distal to the 20S proteolytic core, respectively. As to expression, ubiquitous with highest expression in flowers.

Its function is as follows. Acts as a regulatory subunit of the 26S proteasome which is involved in the ATP-dependent degradation of ubiquitinated proteins. This is 26S proteasome non-ATPase regulatory subunit 13 homolog B (RPN9B) from Arabidopsis thaliana (Mouse-ear cress).